The sequence spans 572 residues: Proline--tRNA ligase (572 aa).

Belongs to the class-II aminoacyl-tRNA synthetase family. ProS type 1 subfamily. As to quaternary structure, homodimer.

The protein localises to the cytoplasm. It catalyses the reaction tRNA(Pro) + L-proline + ATP = L-prolyl-tRNA(Pro) + AMP + diphosphate. Functionally, catalyzes the attachment of proline to tRNA(Pro) in a two-step reaction: proline is first activated by ATP to form Pro-AMP and then transferred to the acceptor end of tRNA(Pro). As ProRS can inadvertently accommodate and process non-cognate amino acids such as alanine and cysteine, to avoid such errors it has two additional distinct editing activities against alanine. One activity is designated as 'pretransfer' editing and involves the tRNA(Pro)-independent hydrolysis of activated Ala-AMP. The other activity is designated 'posttransfer' editing and involves deacylation of mischarged Ala-tRNA(Pro). The misacylated Cys-tRNA(Pro) is not edited by ProRS. In Haemophilus influenzae (strain 86-028NP), this protein is Proline--tRNA ligase.